The primary structure comprises 454 residues: Mitochondrial dynamics protein MID49 (454 aa).

Residues methionine 1–aspartate 22 lie on the Mitochondrial intermembrane side of the membrane. A helical transmembrane segment spans residues phenylalanine 23–alanine 43. The Cytoplasmic portion of the chain corresponds to threonine 44–phenylalanine 454. The disordered stretch occupies residues alanine 76–threonine 113.

Belongs to the MID49/MID51 family. Interacts with DNM1L.

Its subcellular location is the mitochondrion outer membrane. In terms of biological role, mitochondrial outer membrane protein which regulates mitochondrial organization. It is required for mitochondrial fission and promotes the recruitment and association of the fission mediator dynamin-related protein 1 (DNM1L) to the mitochondrial surface independently of the mitochondrial fission FIS1 and MFF proteins. Regulates DNM1L GTPase activity. In Mus musculus (Mouse), this protein is Mitochondrial dynamics protein MID49 (Mief2).